The chain runs to 26 residues: GTP-binding protein Rheb (26 aa).

GTP-binding residues include serine 1, serine 2, valine 13, tyrosine 16, and threonine 19. Serine 1 serves as a coordination point for Mg(2+). The short motif at tyrosine 16–phenylalanine 24 is the Effector region element. Position 19 (threonine 19) interacts with Mg(2+).

This sequence belongs to the small GTPase superfamily. Rheb family.

The enzyme catalyses GTP + H2O = GDP + phosphate + H(+). In terms of biological role, binds GTP and exhibits intrinsic GTPase activity. This is GTP-binding protein Rheb from Crocodylus siamensis (Siamese crocodile).